The primary structure comprises 389 residues: Succinate--CoA ligase [ADP-forming] subunit beta (389 aa).

In terms of domain architecture, ATP-grasp spans lysine 9 to glutamate 244. ATP is bound by residues lysine 46, glycine 53 to glycine 55, glutamate 99, alanine 102, and glutamate 107. The Mg(2+) site is built by asparagine 199 and aspartate 213. Residues asparagine 264 and glycine 321–methionine 323 each bind substrate.

This sequence belongs to the succinate/malate CoA ligase beta subunit family. As to quaternary structure, heterotetramer of two alpha and two beta subunits. Requires Mg(2+) as cofactor.

It carries out the reaction succinate + ATP + CoA = succinyl-CoA + ADP + phosphate. The catalysed reaction is GTP + succinate + CoA = succinyl-CoA + GDP + phosphate. It participates in carbohydrate metabolism; tricarboxylic acid cycle; succinate from succinyl-CoA (ligase route): step 1/1. Functionally, succinyl-CoA synthetase functions in the citric acid cycle (TCA), coupling the hydrolysis of succinyl-CoA to the synthesis of either ATP or GTP and thus represents the only step of substrate-level phosphorylation in the TCA. The beta subunit provides nucleotide specificity of the enzyme and binds the substrate succinate, while the binding sites for coenzyme A and phosphate are found in the alpha subunit. This Paraburkholderia xenovorans (strain LB400) protein is Succinate--CoA ligase [ADP-forming] subunit beta.